The following is a 150-amino-acid chain: S-protein homolog 28 (150 aa).

A glycan (N-linked (GlcNAc...) asparagine) is linked at Asn122.

It belongs to the plant self-incompatibility (S1) protein family.

It localises to the secreted. The protein is S-protein homolog 28 of Arabidopsis thaliana (Mouse-ear cress).